The following is a 769-amino-acid chain: 5-methyltetrahydropteroyltriglutamate--homocysteine methyltransferase (769 aa).

Residues 16–19 (RELK) and Lys118 contribute to the 5-methyltetrahydropteroyltri-L-glutamate site. L-homocysteine contacts are provided by residues 440-442 (IGS) and Glu493. L-methionine-binding positions include 440–442 (IGS) and Glu493. 5-methyltetrahydropteroyltri-L-glutamate is bound by residues 524–525 (RC) and Trp570. Asp608 serves as a coordination point for L-homocysteine. Position 608 (Asp608) interacts with L-methionine. Residue Glu614 coordinates 5-methyltetrahydropteroyltri-L-glutamate. 3 residues coordinate Zn(2+): His650, Cys652, and Glu674. His706 serves as the catalytic Proton donor. Cys738 contacts Zn(2+).

Belongs to the vitamin-B12 independent methionine synthase family. Zn(2+) is required as a cofactor.

It catalyses the reaction 5-methyltetrahydropteroyltri-L-glutamate + L-homocysteine = tetrahydropteroyltri-L-glutamate + L-methionine. Its pathway is amino-acid biosynthesis; L-methionine biosynthesis via de novo pathway; L-methionine from L-homocysteine (MetE route): step 1/1. Catalyzes the transfer of a methyl group from 5-methyltetrahydrofolate to homocysteine resulting in methionine formation. The sequence is that of 5-methyltetrahydropteroyltriglutamate--homocysteine methyltransferase from Acidiphilium cryptum (strain JF-5).